The chain runs to 88 residues: Cold-regulated protein BLT14 (88 aa).

The sequence is that of Cold-regulated protein BLT14 (BLT14) from Hordeum vulgare (Barley).